Here is a 358-residue protein sequence, read N- to C-terminus: NAC domain-containing protein 12 (358 aa).

Residues 16-177 (VPPGFRFHPT…GWVVCRVFRK (162 aa)) enclose the NAC domain. A DNA-binding region spans residues 116–183 (IGLRKTLVFY…VFRKKNYQKI (68 aa)).

Stems and roots, specifically in interfascicular fibers (sclerenchyma), cells differentiating into vascular vessels (cambium), and xylem.

It localises to the nucleus. Its function is as follows. Transcriptional activator of genes involved in biosynthesis of secondary walls. Together with NST1, required for the secondary cell wall thickening and lignification of sclerenchymatous fibers and secondary xylem vessels (tracheary elements). Seems to repress the secondary cell wall thickening of xylary fibers. May also regulate the secondary cell wall lignification of other tissues. Binds to and activates the promoter of MYB46. In Arabidopsis thaliana (Mouse-ear cress), this protein is NAC domain-containing protein 12.